The chain runs to 383 residues: MPNRRDFLKTAAFATLGSGIAVSQVLAGECMPSAIHINKYGIGGKMKMTFFPYELKLRHVFTVATYSRTTTPDVQVEIEYEGVTGYGEASMPPYLGETVESVMNFLKKVNLEQFSDPFQLEDILSYVDSLSPKDTAAKAAVDIALHDLVGKLLGAPWYKIWGLNKEKTPSTTFTIGIDTPDVVRAKTKECAGLFNILKVKLGRDNDKEMIETIRSVTDLPIAVDANQGWKDRQYALDMIHWLKEKGIVMIEQPMPKEQLDDIAWVTQQSPLPVFADESLQRLGDVAALKGAFTGINIKLMKCTGMREAWKMVTLAHALGMRVMVGCMTETSCAISAASQFSPAVDFADLDGNLLISNDRFKGVEVVNGKITLNDLPGIGVMKI.

Residues Arg68, Tyr94, and 198–200 (KVK) contribute to the substrate site. Asp224, Glu251, and Asp276 together coordinate Mg(2+). Substrate contacts are provided by residues Lys298, 326–328 (CMT), and 348–350 (DLD).

Belongs to the mandelate racemase/muconate lactonizing enzyme family. Mg(2+) serves as cofactor.

The enzyme catalyses L-alanyl-L-glutamate = L-alanyl-D-glutamate. Its function is as follows. Catalyzes the epimerization of L-Ala-D-Glu to L-Ala-L-Glu and may play a role in the metabolism of the murein peptide, of which L-Ala-D-Glu is a component. Is also able to catalyze the epimerization of L-Ala-D-Asp, L-Ala-L-Glu, L-Ala-L-Ser, L-Ala-L-Pro, L-Ala-L-L-Val, L-Ala-L-Thr, L-Ala-L-Leu, L-Ala-L-Ile and L-Gly-L-Glu (in vitro). The protein is L-Ala-D/L-Glu epimerase of Bacteroides thetaiotaomicron (strain ATCC 29148 / DSM 2079 / JCM 5827 / CCUG 10774 / NCTC 10582 / VPI-5482 / E50).